We begin with the raw amino-acid sequence, 95 residues long: Osteocalcin-2 (95 aa).

An N-terminal signal peptide occupies residues 1-23; the sequence is MRTLSLLTLLALAALCLSDLTDA. A propeptide spanning residues 24–49 is cleaved from the precursor; that stretch reads KPSGPESDKAFMSKQEGNKVVNRLRR. Residues 46–92 enclose the Gla domain; sequence RLRRYLGASVPSPDPLEPTREQCELNPACDELSDQYGLKTAYKRIYG. Residues Glu-62, Glu-66, Glu-69, and Asp-75 each coordinate Ca(2+). The cysteines at positions 68 and 74 are disulfide-linked.

It belongs to the osteocalcin/matrix Gla protein family. Gamma-carboxyglutamate residues are formed by vitamin K dependent carboxylation by GGCX. These residues are essential for the binding of calcium. Carboxylated in a Ptprv/Esp-dependent process. Decarboxylation promotes the hormone activity. As to expression, bone.

The protein localises to the secreted. Its function is as follows. The carboxylated form is one of the main organic components of the bone matrix, which constitutes 1-2% of the total bone protein: it acts as a negative regulator of bone formation and is required to limit bone formation without impairing bone resorption or mineralization. The carboxylated form binds strongly to apatite and calcium. Functionally, the uncarboxylated form acts as a hormone secreted by osteoblasts, which regulates different cellular processes, such as energy metabolism, male fertility and brain development. Regulates of energy metabolism by acting as a hormone favoring pancreatic beta-cell proliferation, insulin secretion and sensitivity and energy expenditure. Uncarboxylated osteocalcin hormone also promotes testosterone production in the testes: acts as a ligand for G protein-coupled receptor GPRC6A at the surface of Leydig cells, initiating a signaling response that promotes the expression of enzymes required for testosterone synthesis in a CREB-dependent manner. Also acts as a regulator of brain development: osteocalcin hormone crosses the blood-brain barrier and acts as a ligand for GPR158 on neurons, initiating a signaling response that prevents neuronal apoptosis in the hippocampus, favors the synthesis of all monoamine neurotransmitters and inhibits that of gamma-aminobutyric acid (GABA). Osteocalcin also crosses the placenta during pregnancy and maternal osteocalcin is required for fetal brain development. This Mus musculus (Mouse) protein is Osteocalcin-2 (Bglap2).